The following is a 375-amino-acid chain: Queuine tRNA-ribosyltransferase (375 aa).

Residue Asp90 is the Proton acceptor of the active site. Substrate is bound by residues 90–94 (DSGGF), Asp144, Gln190, and Gly217. Residues 248–254 (GIGTPHY) form an RNA binding region. Asp267 acts as the Nucleophile in catalysis. The tract at residues 272-276 (ARITR) is RNA binding; important for wobble base 34 recognition. Residues Cys305, Cys307, Cys310, and His336 each coordinate Zn(2+).

Belongs to the queuine tRNA-ribosyltransferase family. In terms of assembly, homodimer. Within each dimer, one monomer is responsible for RNA recognition and catalysis, while the other monomer binds to the replacement base PreQ1. Requires Zn(2+) as cofactor.

It catalyses the reaction 7-aminomethyl-7-carbaguanine + guanosine(34) in tRNA = 7-aminomethyl-7-carbaguanosine(34) in tRNA + guanine. It functions in the pathway tRNA modification; tRNA-queuosine biosynthesis. Functionally, catalyzes the base-exchange of a guanine (G) residue with the queuine precursor 7-aminomethyl-7-deazaguanine (PreQ1) at position 34 (anticodon wobble position) in tRNAs with GU(N) anticodons (tRNA-Asp, -Asn, -His and -Tyr). Catalysis occurs through a double-displacement mechanism. The nucleophile active site attacks the C1' of nucleotide 34 to detach the guanine base from the RNA, forming a covalent enzyme-RNA intermediate. The proton acceptor active site deprotonates the incoming PreQ1, allowing a nucleophilic attack on the C1' of the ribose to form the product. After dissociation, two additional enzymatic reactions on the tRNA convert PreQ1 to queuine (Q), resulting in the hypermodified nucleoside queuosine (7-(((4,5-cis-dihydroxy-2-cyclopenten-1-yl)amino)methyl)-7-deazaguanosine). The chain is Queuine tRNA-ribosyltransferase from Borreliella burgdorferi (strain ATCC 35210 / DSM 4680 / CIP 102532 / B31) (Borrelia burgdorferi).